The sequence spans 453 residues: Phosphoglucosamine mutase (453 aa).

Serine 100 serves as the catalytic Phosphoserine intermediate. Residues serine 100, aspartate 239, aspartate 241, and aspartate 243 each coordinate Mg(2+). Serine 100 carries the post-translational modification Phosphoserine.

Belongs to the phosphohexose mutase family. Requires Mg(2+) as cofactor. Post-translationally, activated by phosphorylation.

It catalyses the reaction alpha-D-glucosamine 1-phosphate = D-glucosamine 6-phosphate. Functionally, catalyzes the conversion of glucosamine-6-phosphate to glucosamine-1-phosphate. This Buchnera aphidicola subsp. Baizongia pistaciae (strain Bp) protein is Phosphoglucosamine mutase.